The following is a 431-amino-acid chain: Glutamate-1-semialdehyde 2,1-aminomutase 2 (431 aa).

The residue at position 268 (Lys268) is an N6-(pyridoxal phosphate)lysine.

It belongs to the class-III pyridoxal-phosphate-dependent aminotransferase family. HemL subfamily. Homodimer. Requires pyridoxal 5'-phosphate as cofactor.

It localises to the cytoplasm. The catalysed reaction is (S)-4-amino-5-oxopentanoate = 5-aminolevulinate. It participates in porphyrin-containing compound metabolism; protoporphyrin-IX biosynthesis; 5-aminolevulinate from L-glutamyl-tRNA(Glu): step 2/2. The sequence is that of Glutamate-1-semialdehyde 2,1-aminomutase 2 from Anoxybacillus flavithermus (strain DSM 21510 / WK1).